Here is a 101-residue protein sequence, read N- to C-terminus: Large ribosomal subunit protein uL6m (101 aa).

It belongs to the universal ribosomal protein uL6 family.

Its subcellular location is the mitochondrion. This is Large ribosomal subunit protein uL6m (RPL6) from Marchantia polymorpha (Common liverwort).